The following is a 601-amino-acid chain: MEGSDFLLAGVLFLFAAVAAVPLASRLGIGAVLGYLLAGIAIGPWGLGFISDVDEILHFSELGVVFLMFIIGLELNPSKLWQLRRSIFGVGAAQVLLSAALLAGLLMLTHFSWQAAVVGGIGLAMSSTAMALQLMRDKRMNRSESGQLGFSVLLFQDLAVIPALALVPLLAGSADEHFDWMKIGMKVLAFVGMLIGGRYLLRPVFRFIAASGVREVFTAATLLLVLGSALFMDALGLSMALGTFIAGVLLAESEYRHELETAIDPFKGLLLGLFFISVGMSLNLGVLYTHLLWVVISVVVLVAVKILVLYLLARLYGVRSSERMQFAGVLSQGGEFAFVLFSTASSQRLFQGDQMALLLVTVTLSMMTTPLLMKLVDKWLSRQFNGPEEEDEKPWVNDDKPQVIVVGFGRFGQVIGRLLMANKMRITVLERDISAVNLMRKYGYKVYYGDATQVDLLRSAGAEAAESIVITCNEPEDTMKLVEICQQHFPHLHILARARGRVEAHELLQAGVTQFSRETFSSALELGRKTLVTLGMHPHQAQRAQLHFRRLDMRMLRELIPMHADTVQISRAREARRELEEIFQREMQQERRQLDGWDEFE.

13 helical membrane-spanning segments follow: residues 4–24, 29–49, 55–75, 87–107, 115–135, 152–172, 177–197, 207–227, 230–250, 268–288, 291–311, 324–344, and 356–376; these read SDFL…VPLA, IGAV…GLGF, EILH…GLEL, IFGV…GLLM, AAVV…LQLM, VLLF…LLAG, HFDW…LIGG, FIAA…LVLG, LFMD…GVLL, GLLL…GVLY, LLWV…VLYL, MQFA…FSTA, and ALLL…MKLV. Residues 400-519 form the RCK N-terminal domain; that stretch reads KPQVIVVGFG…AGVTQFSRET (120 aa).

It belongs to the monovalent cation:proton antiporter 2 (CPA2) transporter (TC 2.A.37) family. KefB subfamily. Interacts with the regulatory subunit KefG.

It localises to the cell inner membrane. In terms of biological role, pore-forming subunit of a potassium efflux system that confers protection against electrophiles. Catalyzes K(+)/H(+) antiport. This is Glutathione-regulated potassium-efflux system protein KefB from Escherichia coli (strain SMS-3-5 / SECEC).